The chain runs to 210 residues: Isochorismatase domain-containing protein 2B (210 aa).

At Lys-178 the chain carries N6-succinyllysine.

It belongs to the isochorismatase family. As to quaternary structure, interacts with CDKN2A. Ubiquitous. Expressed predominantly in uterus, stomach and urinary tract.

It localises to the cytoplasm. The protein resides in the nucleus. This chain is Isochorismatase domain-containing protein 2B (Isoc2b), found in Mus musculus (Mouse).